A 401-amino-acid chain; its full sequence is Argininosuccinate synthase (401 aa).

8 to 16 (AYSGGLDTS) is a binding site for ATP. Tyr87 contacts L-citrulline. Gly117 contributes to the ATP binding site. L-aspartate is bound by residues Thr119, Asn123, and Asp124. Asn123 contacts L-citrulline. The L-citrulline site is built by Arg127, Ser175, Glu259, and Tyr271.

The protein belongs to the argininosuccinate synthase family. Type 1 subfamily. In terms of assembly, homotetramer.

The protein localises to the cytoplasm. The enzyme catalyses L-citrulline + L-aspartate + ATP = 2-(N(omega)-L-arginino)succinate + AMP + diphosphate + H(+). The protein operates within amino-acid biosynthesis; L-arginine biosynthesis; L-arginine from L-ornithine and carbamoyl phosphate: step 2/3. This chain is Argininosuccinate synthase, found in Pseudarthrobacter chlorophenolicus (strain ATCC 700700 / DSM 12829 / CIP 107037 / JCM 12360 / KCTC 9906 / NCIMB 13794 / A6) (Arthrobacter chlorophenolicus).